The chain runs to 411 residues: Isocitrate dehydrogenase [NADP] peroxisomal (411 aa).

NADP(+) contacts are provided by residues 78–80 (TIT) and Arg-85. Thr-80 provides a ligand contact to substrate. Residues 97 to 103 (SPNGTLR), Arg-112, and Arg-135 contribute to the substrate site. Position 254 (Asp-254) interacts with Mn(2+). Residue Lys-262 coordinates NADP(+). Asp-277 provides a ligand contact to Mn(2+). Residues 312–317 (GTVTRH) and Asn-330 contribute to the NADP(+) site.

Belongs to the isocitrate and isopropylmalate dehydrogenases family. It depends on Mg(2+) as a cofactor. Requires Mn(2+) as cofactor.

It localises to the peroxisome. The catalysed reaction is D-threo-isocitrate + NADP(+) = 2-oxoglutarate + CO2 + NADPH. Its function is as follows. May play a role in N-alkane metabolism, glutamate synthesis, and/or NADPH generation in the peroxisomes. The chain is Isocitrate dehydrogenase [NADP] peroxisomal (IDP2) from Candida tropicalis (Yeast).